Consider the following 62-residue polypeptide: Large ribosomal subunit protein eL24 (62 aa).

The Zn(2+) site is built by Cys-6, Cys-9, Cys-32, and Cys-36. Residues 6-36 (CSFCGADIPPGYGIMYVRSDGTVQRFCSRKC) form a C4-type zinc finger.

Belongs to the eukaryotic ribosomal protein eL24 family. Part of the 50S ribosomal subunit. Forms a cluster with proteins L3 and L14. Zn(2+) is required as a cofactor.

Binds to the 23S rRNA. This Pyrobaculum calidifontis (strain DSM 21063 / JCM 11548 / VA1) protein is Large ribosomal subunit protein eL24.